The chain runs to 464 residues: Protein FAM90A26 (464 aa).

Disordered regions lie at residues 1–42 (MMAC…DPRL), 70–293 (PPTL…AKRP), 312–390 (PFQI…DGAQ), and 410–442 (AAPS…VRVP). Composition is skewed to basic and acidic residues over residues 74-83 (GKKEGKENLK) and 97-114 (NKDK…DPQR). A compositionally biased stretch (low complexity) spans 178-197 (SALASLSPLRKASLSSSSSL).

It belongs to the FAM90 family.

The protein is Protein FAM90A26 of Homo sapiens (Human).